The sequence spans 574 residues: Transmembrane protein 108 (574 aa).

A helical transmembrane segment spans residues 9–29 (YCQLLSFLLTLALTKALVLAV). The tract at residues 31-169 (EPSPRESLQT…ATTRRPPRPP (139 aa)) is interaction with SH3GL2. Disordered regions lie at residues 32-352 (PSPR…SGVF) and 364-417 (DATV…PRPL). Polar residues predominate over residues 58–86 (TRLSSVLTLNPTPDGPSSQAAATLETTVS). The span at 132-160 (LPPGDATPTTTLPTKPAGTTSRPTVAPRA) shows a compositional bias: low complexity. The tract at residues 173 to 406 (RKGAGGSTRT…SPAEEEAEAS (234 aa)) is interaction with DST (isoform 1). Residues 245 to 271 (FSSTQPQTVSPATAPRSTSRVPPTTSL) are compositionally biased toward polar residues. Over residues 292–312 (TSPGGEPAATAATGAPASTQP) the composition is skewed to low complexity. Residues 316-332 (PSQSPHGDVQDSASHSD) show a composition bias toward polar residues. Residues 468-488 (IAWVIVAISVPISSCSVLLTV) traverse the membrane as a helical segment. Positions 489–574 (CCMRRKKKTA…FVGNDQVSEI (86 aa)) are interaction with CYFIP2.

In terms of assembly, interacts with DST (isoform 1). Interacts with SH3GL2. Interacts (via N-terminus) with CYFIP1 and CYFIP2; the interactions associate TMEM108 with the WAVE1 complex. In terms of processing, glycosylated. As to expression, expressed in the nervous system tissues, such as hippocampus and spinal cord, is barely detectable in peripheral tissues such as heart, lung, liver, kidney and muscle. In brain, highly expressed in dentate gyrus neurons and expressed in cortex, olfactory bulb, ammon's horn, cerebellum, hypothalamus and striatum.

Its subcellular location is the membrane. The protein resides in the postsynaptic density. It is found in the endosome membrane. The protein localises to the cell projection. It localises to the axon. Its subcellular location is the dendrite. The protein resides in the early endosome. Its function is as follows. Transmembrane protein required for proper cognitive functions. Involved in the development of dentate gyrus (DG) neuron circuitry, is necessary for AMPA receptors surface expression and proper excitatory postsynaptic currents of DG granule neurons. Regulates the organization and stability of the microtubule network of sensory neurons to allow axonal transport. Through the interaction with DST, mediates the docking of the dynein/dynactin motor complex to vesicle cargos for retrograde axonal transport. In hippocampal neurons, required for BDNF-dependent dendrite outgrowth. Cooperates with SH3GL2 and recruits the WAVE1 complex to facilitate actin-dependent BDNF:NTRK2 early endocytic trafficking and mediate signaling from early endosomes. The protein is Transmembrane protein 108 of Mus musculus (Mouse).